The following is a 72-amino-acid chain: Translation initiation factor IF-1 (72 aa).

Residues M1–K72 form the S1-like domain.

Belongs to the IF-1 family. As to quaternary structure, component of the 30S ribosomal translation pre-initiation complex which assembles on the 30S ribosome in the order IF-2 and IF-3, IF-1 and N-formylmethionyl-tRNA(fMet); mRNA recruitment can occur at any time during PIC assembly.

Its subcellular location is the cytoplasm. Its function is as follows. One of the essential components for the initiation of protein synthesis. Stabilizes the binding of IF-2 and IF-3 on the 30S subunit to which N-formylmethionyl-tRNA(fMet) subsequently binds. Helps modulate mRNA selection, yielding the 30S pre-initiation complex (PIC). Upon addition of the 50S ribosomal subunit IF-1, IF-2 and IF-3 are released leaving the mature 70S translation initiation complex. The sequence is that of Translation initiation factor IF-1 from Syntrophus aciditrophicus (strain SB).